Consider the following 334-residue polypeptide: RNA 3'-terminal phosphate cyclase (334 aa).

279-282 (HMGD) contributes to the ATP binding site. Histidine 303 (tele-AMP-histidine intermediate) is an active-site residue.

It belongs to the RNA 3'-terminal cyclase family. Type 1 subfamily.

The protein resides in the cytoplasm. It carries out the reaction a 3'-end 3'-phospho-ribonucleotide-RNA + ATP = a 3'-end 2',3'-cyclophospho-ribonucleotide-RNA + AMP + diphosphate. Its function is as follows. Catalyzes the conversion of 3'-phosphate to a 2',3'-cyclic phosphodiester at the end of RNA. The mechanism of action of the enzyme occurs in 3 steps: (A) adenylation of the enzyme by ATP; (B) transfer of adenylate to an RNA-N3'P to produce RNA-N3'PP5'A; (C) and attack of the adjacent 2'-hydroxyl on the 3'-phosphorus in the diester linkage to produce the cyclic end product. The biological role of this enzyme is unknown but it is likely to function in some aspects of cellular RNA processing. This is RNA 3'-terminal phosphate cyclase from Metallosphaera sedula (strain ATCC 51363 / DSM 5348 / JCM 9185 / NBRC 15509 / TH2).